Reading from the N-terminus, the 376-residue chain is UPF0754 membrane protein SERP1382 (376 aa).

2 helical membrane-spanning segments follow: residues 4 to 24 and 356 to 376; these read ILLVVFMIILGAIIGGVTNMI and TLGFILGGIIGFFQGVIAIFV.

The protein belongs to the UPF0754 family.

The protein localises to the cell membrane. The sequence is that of UPF0754 membrane protein SERP1382 from Staphylococcus epidermidis (strain ATCC 35984 / DSM 28319 / BCRC 17069 / CCUG 31568 / BM 3577 / RP62A).